Here is a 255-residue protein sequence, read N- to C-terminus: Thiazole synthase (255 aa).

The Schiff-base intermediate with DXP role is filled by K96. Residues G157, 183–184 (AG), and 205–206 (NS) each bind 1-deoxy-D-xylulose 5-phosphate.

This sequence belongs to the ThiG family. Homotetramer. Forms heterodimers with either ThiH or ThiS.

It is found in the cytoplasm. The catalysed reaction is [ThiS sulfur-carrier protein]-C-terminal-Gly-aminoethanethioate + 2-iminoacetate + 1-deoxy-D-xylulose 5-phosphate = [ThiS sulfur-carrier protein]-C-terminal Gly-Gly + 2-[(2R,5Z)-2-carboxy-4-methylthiazol-5(2H)-ylidene]ethyl phosphate + 2 H2O + H(+). It functions in the pathway cofactor biosynthesis; thiamine diphosphate biosynthesis. In terms of biological role, catalyzes the rearrangement of 1-deoxy-D-xylulose 5-phosphate (DXP) to produce the thiazole phosphate moiety of thiamine. Sulfur is provided by the thiocarboxylate moiety of the carrier protein ThiS. In vitro, sulfur can be provided by H(2)S. The protein is Thiazole synthase of Staphylococcus carnosus (strain TM300).